Here is an 89-residue protein sequence, read N- to C-terminus: Small ribosomal subunit protein uS15 (89 aa).

It belongs to the universal ribosomal protein uS15 family. As to quaternary structure, part of the 30S ribosomal subunit. Forms a bridge to the 50S subunit in the 70S ribosome, contacting the 23S rRNA.

Functionally, one of the primary rRNA binding proteins, it binds directly to 16S rRNA where it helps nucleate assembly of the platform of the 30S subunit by binding and bridging several RNA helices of the 16S rRNA. Its function is as follows. Forms an intersubunit bridge (bridge B4) with the 23S rRNA of the 50S subunit in the ribosome. In Dictyoglomus thermophilum (strain ATCC 35947 / DSM 3960 / H-6-12), this protein is Small ribosomal subunit protein uS15.